The chain runs to 106 residues: Large ribosomal subunit protein eL42 (106 aa).

The protein belongs to the eukaryotic ribosomal protein eL42 family.

The protein is Large ribosomal subunit protein eL42 (RPL44) of Eremothecium gossypii (strain ATCC 10895 / CBS 109.51 / FGSC 9923 / NRRL Y-1056) (Yeast).